A 305-amino-acid chain; its full sequence is MIKQRTLKQSIKVTGVGLHSGNKVTLTLRPAMPNTGVIYCRTDMNPPVTFPANANAVRDTMLCTCLINEDGVRISTVEHLNAALAGLGIDNIIIEVDAPEIPIMDGSASPFIYLLLDAGIEEQNVAKKFIRVKKPIRIEDGDKWAEFKPYDGFRLDFTIDFEHPAIGKDVRNYVMDFSAQAFVQQISRARTFGFMKDIEYLQSQGLALGGSLDNAIVLDDYRILNEDGLRFKDELVRHKMLDAIGDLYMCGYNIIGDFKAYKSGHGLNNKLLRALLENQEAWEFVSFEDKEEIPQGYVSPAQVFI.

Zn(2+) is bound by residues His79, His238, and Asp242. His265 functions as the Proton donor in the catalytic mechanism.

The protein belongs to the LpxC family. It depends on Zn(2+) as a cofactor.

The enzyme catalyses a UDP-3-O-[(3R)-3-hydroxyacyl]-N-acetyl-alpha-D-glucosamine + H2O = a UDP-3-O-[(3R)-3-hydroxyacyl]-alpha-D-glucosamine + acetate. The protein operates within glycolipid biosynthesis; lipid IV(A) biosynthesis; lipid IV(A) from (3R)-3-hydroxytetradecanoyl-[acyl-carrier-protein] and UDP-N-acetyl-alpha-D-glucosamine: step 2/6. Catalyzes the hydrolysis of UDP-3-O-myristoyl-N-acetylglucosamine to form UDP-3-O-myristoylglucosamine and acetate, the committed step in lipid A biosynthesis. The chain is UDP-3-O-acyl-N-acetylglucosamine deacetylase from Histophilus somni (strain 129Pt) (Haemophilus somnus).